Consider the following 173-residue polypeptide: Co-chaperone protein HscB homolog (173 aa).

Residues Cys-5–Ile-77 form the J domain.

It belongs to the HscB family. As to quaternary structure, interacts with HscA and stimulates its ATPase activity.

Its function is as follows. Co-chaperone involved in the maturation of iron-sulfur cluster-containing proteins. Seems to help targeting proteins to be folded toward HscA. This Pseudomonas putida (strain ATCC 700007 / DSM 6899 / JCM 31910 / BCRC 17059 / LMG 24140 / F1) protein is Co-chaperone protein HscB homolog.